A 38-amino-acid chain; its full sequence is Large ribosomal subunit protein bL36 (38 aa).

Belongs to the bacterial ribosomal protein bL36 family.

The sequence is that of Large ribosomal subunit protein bL36 from Buchnera aphidicola subsp. Schizaphis graminum (strain Sg).